Consider the following 49-residue polypeptide: Large ribosomal subunit protein bL32 (49 aa).

Positions 25 to 49 (AKPVKDKDGTYKLPHHINPTTGEYK) are disordered.

Belongs to the bacterial ribosomal protein bL32 family.

The chain is Large ribosomal subunit protein bL32 from Sulfurimonas denitrificans (strain ATCC 33889 / DSM 1251) (Thiomicrospira denitrificans (strain ATCC 33889 / DSM 1251)).